The following is a 299-amino-acid chain: MNSLVILLGPTGVGKTELSLQVAERFGSPIISSDSRQLYKDLPIGTAAPTPEQMARVKHYMVGTLSLTDYYSASNFEEDVVSLLSELHKTIPTVVMTGGSMMYIDAVCKGIDDIPTVTPEIRDALYMQFETEGLAPILAELKEADPVHYEEVDRNNYKRVIHAVEICRMTGKPYSSFRTNIKKERPFRIIKVGLNRDRDELCDRINQRVDQMMSEGLLEEARRAYPFRHLNSLNTVGYKELFNYFSGEWTLDLAVEKIKRNSRVYARKQMTWFKRDPEITWFHPDETEAIFTHLSQQII.

ATP is bound at residue 9–16 (GPTGVGKT). 11–16 (TGVGKT) is a binding site for substrate. The interval 34–37 (DSRQ) is interaction with substrate tRNA.

Belongs to the IPP transferase family. Monomer. Requires Mg(2+) as cofactor.

It carries out the reaction adenosine(37) in tRNA + dimethylallyl diphosphate = N(6)-dimethylallyladenosine(37) in tRNA + diphosphate. Its function is as follows. Catalyzes the transfer of a dimethylallyl group onto the adenine at position 37 in tRNAs that read codons beginning with uridine, leading to the formation of N6-(dimethylallyl)adenosine (i(6)A). This Parabacteroides distasonis (strain ATCC 8503 / DSM 20701 / CIP 104284 / JCM 5825 / NCTC 11152) protein is tRNA dimethylallyltransferase 2.